The sequence spans 105 residues: MISVDFSKGLVPTIILDDQNGDVLMLAYMNEESYHKTLETGYTWFFSRSRNELWNKGATSGHTQKVKQIWTDCDNDTLLIRVTQIGPACHTGKKSCFFNLIKEDF.

Residue aspartate 72 participates in Mg(2+) binding. Cysteine 73 contacts Zn(2+). The Mg(2+) site is built by aspartate 74 and aspartate 76. Zn(2+) is bound by residues cysteine 89 and cysteine 96.

The protein belongs to the PRA-CH family. As to quaternary structure, homodimer. It depends on Mg(2+) as a cofactor. Zn(2+) serves as cofactor.

It localises to the cytoplasm. The catalysed reaction is 1-(5-phospho-beta-D-ribosyl)-5'-AMP + H2O = 1-(5-phospho-beta-D-ribosyl)-5-[(5-phospho-beta-D-ribosylamino)methylideneamino]imidazole-4-carboxamide. Its pathway is amino-acid biosynthesis; L-histidine biosynthesis; L-histidine from 5-phospho-alpha-D-ribose 1-diphosphate: step 3/9. In terms of biological role, catalyzes the hydrolysis of the adenine ring of phosphoribosyl-AMP. This chain is Phosphoribosyl-AMP cyclohydrolase, found in Listeria monocytogenes serotype 4a (strain HCC23).